The chain runs to 668 residues: Methionine--tRNA ligase (668 aa).

Residues 11–21 carry the 'HIGH' region motif; sequence AYTNGPLHIGH. Zn(2+) is bound by residues C146, C149, C159, and C162. The 'KMSKS' region signature appears at 332–336; sequence KMSTS. Residue T335 participates in ATP binding. Positions 567–668 constitute a tRNA-binding domain; it reads EFNRLDLRVG…REVEPGERIR (102 aa).

Belongs to the class-I aminoacyl-tRNA synthetase family. MetG type 1 subfamily. Homodimer. The cofactor is Zn(2+).

It is found in the cytoplasm. It carries out the reaction tRNA(Met) + L-methionine + ATP = L-methionyl-tRNA(Met) + AMP + diphosphate. In terms of biological role, is required not only for elongation of protein synthesis but also for the initiation of all mRNA translation through initiator tRNA(fMet) aminoacylation. The polypeptide is Methionine--tRNA ligase (Methanopyrus kandleri (strain AV19 / DSM 6324 / JCM 9639 / NBRC 100938)).